The following is a 421-amino-acid chain: Nuclear envelope integral membrane protein 2 (421 aa).

The first 22 residues, 1–22 (MPPGSWWLVLWLPPLATLPAGA), serve as a signal peptide directing secretion. The next 5 membrane-spanning stretches (helical) occupy residues 147 to 167 (NVVDFRLFLVFATGIFLFFYA), 175 to 195 (VFYYSSGTVLGILMTLVFVLL), 206 to 226 (TFGALMIGCWFASVYVLCQLM), 232 to 252 (LWCGNRIYVLGYVLVVGLCSF), and 279 to 299 (LVLVYTGMAISQFAYAVMILL).

It belongs to the NEMP family.

It localises to the nucleus inner membrane. The sequence is that of Nuclear envelope integral membrane protein 2 (Nemp2) from Rattus norvegicus (Rat).